Here is a 500-residue protein sequence, read N- to C-terminus: Glycerol kinase (500 aa).

ADP is bound at residue Thr-15. Positions 15, 16, and 17 each coordinate ATP. Position 15 (Thr-15) interacts with sn-glycerol 3-phosphate. Arg-19 contacts ADP. 4 residues coordinate sn-glycerol 3-phosphate: Arg-85, Glu-86, Tyr-137, and Asp-245. Arg-85, Glu-86, Tyr-137, Asp-245, and Gln-246 together coordinate glycerol. The ADP site is built by Thr-267 and Gly-310. Residues Thr-267, Gly-310, Gln-314, and Gly-411 each coordinate ATP. 2 residues coordinate ADP: Gly-411 and Asn-415.

This sequence belongs to the FGGY kinase family.

It carries out the reaction glycerol + ATP = sn-glycerol 3-phosphate + ADP + H(+). It functions in the pathway polyol metabolism; glycerol degradation via glycerol kinase pathway; sn-glycerol 3-phosphate from glycerol: step 1/1. Inhibited by fructose 1,6-bisphosphate (FBP). Its function is as follows. Key enzyme in the regulation of glycerol uptake and metabolism. Catalyzes the phosphorylation of glycerol to yield sn-glycerol 3-phosphate. The protein is Glycerol kinase of Aeromonas salmonicida (strain A449).